The following is a 628-amino-acid chain: Probable potassium transport system protein Kup (628 aa).

12 helical membrane passes run 15 to 35 (LAIA…LYSL), 55 to 75 (VISL…VLFV), 104 to 124 (AGLL…DAVI), 142 to 162 (PHLS…LFWI), 173 to 193 (LFGP…LWHI), 210 to 230 (TFMA…VLVL), 252 to 272 (WYVL…ALLM), 281 to 301 (PFFL…STIA), 342 to 362 (IYVP…VIAF), 372 to 392 (YGIA…VVMV), 400 to 420 (LLVA…FGAN), and 426 to 446 (EGGW…MTWY).

This sequence belongs to the HAK/KUP transporter (TC 2.A.72) family.

It localises to the cell inner membrane. The catalysed reaction is K(+)(in) + H(+)(in) = K(+)(out) + H(+)(out). Transport of potassium into the cell. Likely operates as a K(+):H(+) symporter. This Paraburkholderia xenovorans (strain LB400) protein is Probable potassium transport system protein Kup.